We begin with the raw amino-acid sequence, 425 residues long: Histone-binding protein RBBP4 (425 aa).

At Ala2 the chain carries N-acetylalanine. Position 4 is an N6-acetyllysine; alternate (Lys4). Lys4 is covalently cross-linked (Glycyl lysine isopeptide (Lys-Gly) (interchain with G-Cter in SUMO2); alternate). Lys4 is covalently cross-linked (Glycyl lysine isopeptide (Lys-Gly) (interchain with G-Cter in ubiquitin); alternate). 7 WD repeats span residues Tyr32 to Gly125, Glu126 to Gly175, His176 to Phe223, Gly225 to Asp270, Ala271 to Glu314, Ser315 to Gly371, and Gly372 to Met404. Residue Ser110 is modified to Phosphoserine. N6-acetyllysine; alternate is present on Lys160. A Glycyl lysine isopeptide (Lys-Gly) (interchain with G-Cter in SUMO2); alternate cross-link involves residue Lys160. Residue Ser355 is modified to Phosphoserine.

It belongs to the WD repeat RBAP46/RBAP48/MSI1 family. Binds directly to helix 1 of the histone fold of histone H4, a region that is not accessible when H4 is in chromatin. Subunit of the chromatin assembly factor 1 (CAF-1) complex, which is composed of RBBP4, CHAF1B and CHAF1A. Subunit of the core histone deacetylase (HDAC) complex, which is composed of HDAC1, HDAC2, RBBP4 and RBBP7. The core HDAC complex associates with SIN3A, ARID4B/SAP180, SAP18, SAP30, SAP130, SUDS3/SAP45 and possibly ARID4A/RBP1 and ING1 to form the SIN3 HDAC complex. Component of the nucleosome remodeling and deacetylase (NuRD) repressor complex, composed of core proteins MTA1, MTA2, MTA3, RBBP4, RBBP7, HDAC1, HDAC2, MBD2, MBD3, and peripherally associated proteins CDK2AP1, CDK2AP2, GATAD2A, GATAD2B, CHD3, CHD4 and CHD5. The exact stoichiometry of the NuRD complex is unknown, and some subunits such as MBD2 and MBD3, GATAD2A and GATAD2B, and CHD3, CHD4 and CHD5 define mutually exclusive NuRD complexes. Interacts with ZNF512B; the interaction is direct and may play a role in repressing gene expression. The NuRD complex may also interact with MBD3L1 and MBD3L2. Component of the PRC2 complex, which consists of the core subunits EED, EZH1 or EZH2, SUZ12, and RBBP4, and various combinations of accessory subunits including AEBP2, JARID2, PHF19, MTF2 and EPOP. Forms a monomeric PRC2.2 (class 2) complex consisting of at least SUZ12, RBBP4, AEBP2 and JARID2. Forms a dimeric PRC2.1 (class 1, PRC-PCL) complex consisting of at least SUZ12, RBBP4, and PHF19; PHF19 stabilizes the dimeric structure which enhances PRC2 interaction with chromatin. Component of the NURF-1 ISWI chromatin remodeling complex (also called the nucleosome-remodeling factor (NURF) complex) at least composed of SMARCA1 (isoform 2), BPTF, RBBP4 and RBBP7. Within the complex interacts with isoform 2 of SMARCA1. Component of the BPFT-SMARCA1 complex at least composed of SMARCA1 (isoform 1), BPFT, RBBP4 and RBBP7; the complex is catalytically inactive and does not remodel chromatin. Within the complex interacts with isoform 1 of SMARCA1. Interacts with the ISWI chromatin remodeling complex component SMARCA5; the interaction is direct. Interacts with the viral protein-binding domain of the retinoblastoma protein (RB1). Component of the DREAM complex (also named LINC complex) at least composed of E2F4, E2F5, LIN9, LIN37, LIN52, LIN54, MYBL1, MYBL2, RBL1, RBL2, RBBP4, TFDP1 and TFDP2. The complex exists in quiescent cells where it represses cell cycle-dependent genes. It dissociates in S phase when LIN9, LIN37, LIN52 and LIN54 form a subcomplex that binds to MYBL2. Found in a complex composed of at least SINHCAF, SIN3A, HDAC1, SAP30, RBBP4, OGT and TET1. Interacts with ZNF827; the interaction is direct and recruits RBBP4 to telomeres. Interacts with MTA1; the interaction is direct and mutually exclusive with binding histone H4. Interacts with ARMC12 (via ARM domains). Interacts with BRCA1. Interacts with CDK2AP1. Interacts with CREBBP, and this interaction may be enhanced by the binding of phosphorylated CREB1 to CREBBP. Interacts with ERCC6. Interacts with HDAC7. Interacts with PHF6. Interacts with PWWP2B. Interacts with SPEN/MINT. Interacts with SUV39H1.

The protein resides in the nucleus. The protein localises to the chromosome. It localises to the telomere. Its function is as follows. Core histone-binding subunit that may target chromatin assembly factors, chromatin remodeling factors and histone deacetylases to their histone substrates in a manner that is regulated by nucleosomal DNA. Component of the chromatin assembly factor 1 (CAF-1) complex, which is required for chromatin assembly following DNA replication and DNA repair. Component of the core histone deacetylase (HDAC) complex, which promotes histone deacetylation and consequent transcriptional repression. Component of the nucleosome remodeling and histone deacetylase complex (the NuRD complex), which promotes transcriptional repression by histone deacetylation and nucleosome remodeling. Component of the PRC2 complex, which promotes repression of homeotic genes during development. Component of the NURF (nucleosome remodeling factor) complex. In Pongo abelii (Sumatran orangutan), this protein is Histone-binding protein RBBP4 (RBBP4).